We begin with the raw amino-acid sequence, 131 residues long: Profilin-4 (131 aa).

Belongs to the profilin family. As to quaternary structure, occurs in many kinds of cells as a complex with monomeric actin in a 1:1 ratio.

The protein resides in the cytoplasm. The protein localises to the cytoskeleton. In terms of biological role, binds to actin and affects the structure of the cytoskeleton. At high concentrations, profilin prevents the polymerization of actin, whereas it enhances it at low concentrations. By binding to PIP2, it inhibits the formation of IP3 and DG. This chain is Profilin-4, found in Hevea brasiliensis (Para rubber tree).